A 102-amino-acid polypeptide reads, in one-letter code: Co-chaperonin GroES (102 aa).

The protein belongs to the GroES chaperonin family. As to quaternary structure, heptamer of 7 subunits arranged in a ring. Interacts with the chaperonin GroEL.

Its subcellular location is the cytoplasm. In terms of biological role, together with the chaperonin GroEL, plays an essential role in assisting protein folding. The GroEL-GroES system forms a nano-cage that allows encapsulation of the non-native substrate proteins and provides a physical environment optimized to promote and accelerate protein folding. GroES binds to the apical surface of the GroEL ring, thereby capping the opening of the GroEL channel. This Streptomyces avermitilis (strain ATCC 31267 / DSM 46492 / JCM 5070 / NBRC 14893 / NCIMB 12804 / NRRL 8165 / MA-4680) protein is Co-chaperonin GroES.